Reading from the N-terminus, the 192-residue chain is dTTP/UTP pyrophosphatase (192 aa).

Aspartate 71 functions as the Proton acceptor in the catalytic mechanism.

It belongs to the Maf family. YhdE subfamily. The cofactor is a divalent metal cation.

It is found in the cytoplasm. It carries out the reaction dTTP + H2O = dTMP + diphosphate + H(+). The enzyme catalyses UTP + H2O = UMP + diphosphate + H(+). In terms of biological role, nucleoside triphosphate pyrophosphatase that hydrolyzes dTTP and UTP. May have a dual role in cell division arrest and in preventing the incorporation of modified nucleotides into cellular nucleic acids. The sequence is that of dTTP/UTP pyrophosphatase from Clostridium tetani (strain Massachusetts / E88).